Here is an 88-residue protein sequence, read N- to C-terminus: Putative carnobacteriocin-BM1 immunity protein (88 aa).

Its function is as follows. Could impart immunity to carnobacteriocin-BM1 to naturally sensitive host strains. In Carnobacterium maltaromaticum (Carnobacterium piscicola), this protein is Putative carnobacteriocin-BM1 immunity protein.